The sequence spans 115 residues: MKKAMAILAVLAAAAVICGLLFFHNDVTDRFNPFIHQQDVYVQIDRDGRHLSPGGTEYTLDGYNASGKKEEVTFFAGKELRKNAYLKVKAKGKYVETWEEVKFEDMPDSVQSKLK.

An N-terminal signal peptide occupies residues 1–29; that stretch reads MKKAMAILAVLAAAAVICGLLFFHNDVTD.

This is an uncharacterized protein from Bacillus subtilis (strain 168).